The chain runs to 176 residues: Ribosome rescue factor SmrB (176 aa).

The region spanning 97–172 (LDMHGMTQQE…GDGALLVLLS (76 aa)) is the Smr domain.

Belongs to the SmrB family. Associates with collided ribosomes, but not with correctly translating polysomes.

Its function is as follows. Acts as a ribosome collision sensor. Detects stalled/collided disomes (pairs of ribosomes where the leading ribosome is stalled and a second ribosome has collided with it) and endonucleolytically cleaves mRNA at the 5' boundary of the stalled ribosome. Stalled/collided disomes form a new interface (primarily via the 30S subunits) that binds SmrB. Cleaved mRNA becomes available for tmRNA ligation, leading to ribosomal subunit dissociation and rescue of stalled ribosomes. The sequence is that of Ribosome rescue factor SmrB from Vibrio campbellii (strain ATCC BAA-1116).